The chain runs to 96 residues: Protein Vpr (96 aa).

Residues 1–42 form a homooligomerization region; the sequence is MEQAPEDQGPPREPYQEWALETLEELKNEAVRHFPRPWLHQL. Phosphoserine; by host is present on residues Ser-79 and Ser-96.

It belongs to the HIV-1 VPR protein family. Homooligomer, may form homodimer. Interacts with p6-gag region of the Pr55 Gag precursor protein through a (Leu-X-X)4 motif near the C-terminus of the P6gag protein. Interacts with host UNG. May interact with host RAD23A/HHR23A. Interacts with host VPRBP/DCAF1, leading to hijack the CUL4A-RBX1-DDB1-DCAF1/VPRBP complex, mediating ubiquitination of host proteins such as TERT and ZGPAT and arrest of the cell cycle in G2 phase. Phosphorylated on several residues by host. These phosphorylations regulate VPR activity for the nuclear import of the HIV-1 pre-integration complex.

Its subcellular location is the virion. It localises to the host nucleus. The protein localises to the host extracellular space. In terms of biological role, during virus replication, may deplete host UNG protein, and incude G2-M cell cycle arrest. Acts by targeting specific host proteins for degradation by the 26S proteasome, through association with the cellular CUL4A-DDB1 E3 ligase complex by direct interaction with host VPRPB/DCAF-1. Cell cycle arrest reportedly occurs within hours of infection and is not blocked by antiviral agents, suggesting that it is initiated by the VPR carried into the virion. Additionally, VPR induces apoptosis in a cell cycle dependent manner suggesting that these two effects are mechanistically linked. Detected in the serum and cerebrospinal fluid of AIDS patient, VPR may also induce cell death to bystander cells. Functionally, during virus entry, plays a role in the transport of the viral pre-integration (PIC) complex to the host nucleus. This function is crucial for viral infection of non-dividing macrophages. May act directly at the nuclear pore complex, by binding nucleoporins phenylalanine-glycine (FG)-repeat regions. This is Protein Vpr from Pan (chimpanzees).